Consider the following 68-residue polypeptide: Guanine nucleotide-binding protein G(I)/G(S)/G(O) subunit gamma-5B (68 aa).

In terms of domain architecture, G protein gamma spans 3–68 (GFSSVAATKK…FRPQKVCSFL (66 aa)). C65 bears the Cysteine methyl ester mark. Residue C65 is the site of S-geranylgeranyl cysteine attachment. Positions 66-68 (SFL) are cleaved as a propeptide — removed in mature form.

This sequence belongs to the G protein gamma family. In terms of assembly, g proteins are composed of 3 units; alpha, beta and gamma.

It localises to the cell membrane. Functionally, guanine nucleotide-binding proteins (G proteins) are involved as a modulator or transducer in various transmembrane signaling systems. The beta and gamma chains are required for the GTPase activity, for replacement of GDP by GTP, and for G protein-effector interaction. The chain is Guanine nucleotide-binding protein G(I)/G(S)/G(O) subunit gamma-5B from Homo sapiens (Human).